Reading from the N-terminus, the 245-residue chain is 1-(5-phosphoribosyl)-5-[(5-phosphoribosylamino)methylideneamino] imidazole-4-carboxamide isomerase (245 aa).

Asp-7 acts as the Proton acceptor in catalysis. Asp-129 serves as the catalytic Proton donor.

It belongs to the HisA/HisF family.

The protein resides in the cytoplasm. The enzyme catalyses 1-(5-phospho-beta-D-ribosyl)-5-[(5-phospho-beta-D-ribosylamino)methylideneamino]imidazole-4-carboxamide = 5-[(5-phospho-1-deoxy-D-ribulos-1-ylimino)methylamino]-1-(5-phospho-beta-D-ribosyl)imidazole-4-carboxamide. It participates in amino-acid biosynthesis; L-histidine biosynthesis; L-histidine from 5-phospho-alpha-D-ribose 1-diphosphate: step 4/9. The protein is 1-(5-phosphoribosyl)-5-[(5-phosphoribosylamino)methylideneamino] imidazole-4-carboxamide isomerase of Shewanella baltica (strain OS155 / ATCC BAA-1091).